The chain runs to 555 residues: Membrane protein insertase YidC (555 aa).

Residues I7 to Q24 form a helical membrane-spanning segment. The interval T61–T81 is disordered. The next 5 membrane-spanning stretches (helical) occupy residues G341–L361, W364–A384, L430–L450, L468–Q488, and V503–V523.

The protein belongs to the OXA1/ALB3/YidC family. Type 1 subfamily. Interacts with the Sec translocase complex via SecD. Specifically interacts with transmembrane segments of nascent integral membrane proteins during membrane integration.

Its subcellular location is the cell inner membrane. Required for the insertion and/or proper folding and/or complex formation of integral membrane proteins into the membrane. Involved in integration of membrane proteins that insert both dependently and independently of the Sec translocase complex, as well as at least some lipoproteins. Aids folding of multispanning membrane proteins. This is Membrane protein insertase YidC from Cupriavidus pinatubonensis (strain JMP 134 / LMG 1197) (Cupriavidus necator (strain JMP 134)).